Here is a 364-residue protein sequence, read N- to C-terminus: Methylthioribose-1-phosphate isomerase (364 aa).

D254 functions as the Proton donor in the catalytic mechanism.

This sequence belongs to the eIF-2B alpha/beta/delta subunits family. MtnA subfamily.

The protein localises to the cytoplasm. The protein resides in the nucleus. It carries out the reaction 5-(methylsulfanyl)-alpha-D-ribose 1-phosphate = 5-(methylsulfanyl)-D-ribulose 1-phosphate. Its pathway is amino-acid biosynthesis; L-methionine biosynthesis via salvage pathway; L-methionine from S-methyl-5-thio-alpha-D-ribose 1-phosphate: step 1/6. In terms of biological role, catalyzes the interconversion of methylthioribose-1-phosphate (MTR-1-P) into methylthioribulose-1-phosphate (MTRu-1-P). In Drosophila melanogaster (Fruit fly), this protein is Methylthioribose-1-phosphate isomerase.